The following is a 152-amino-acid chain: UPF0266 membrane protein YobD (152 aa).

Helical transmembrane passes span 6–26, 45–65, and 67–87; these read LVLI…QFIM, VDSV…VTSH, and AQMT…IFWI.

It belongs to the UPF0266 family.

The protein resides in the cell inner membrane. The chain is UPF0266 membrane protein YobD from Salmonella newport (strain SL254).